We begin with the raw amino-acid sequence, 662 residues long: UvrABC system protein B (662 aa).

The 390-residue stretch at 25 to 414 (TGLNSKKRSQ…GTVVELIIRP (390 aa)) folds into the Helicase ATP-binding domain. An ATP-binding site is contributed by 38 to 45 (GITGSGKT). The short motif at 91–114 (YYDYYQPESYIVRTDTFIEKDSSI) is the Beta-hairpin element. The Helicase C-terminal domain maps to 430 to 592 (QVEDLISEIQ…IIPKTINRAI (163 aa)). In terms of domain architecture, UVR spans 622–657 (KAHMDKLKKEMFKAASNLEFEQAAKLRNQLKALEEA).

This sequence belongs to the UvrB family. Forms a heterotetramer with UvrA during the search for lesions. Interacts with UvrC in an incision complex.

Its subcellular location is the cytoplasm. The UvrABC repair system catalyzes the recognition and processing of DNA lesions. A damage recognition complex composed of 2 UvrA and 2 UvrB subunits scans DNA for abnormalities. Upon binding of the UvrA(2)B(2) complex to a putative damaged site, the DNA wraps around one UvrB monomer. DNA wrap is dependent on ATP binding by UvrB and probably causes local melting of the DNA helix, facilitating insertion of UvrB beta-hairpin between the DNA strands. Then UvrB probes one DNA strand for the presence of a lesion. If a lesion is found the UvrA subunits dissociate and the UvrB-DNA preincision complex is formed. This complex is subsequently bound by UvrC and the second UvrB is released. If no lesion is found, the DNA wraps around the other UvrB subunit that will check the other stand for damage. The protein is UvrABC system protein B of Rickettsia prowazekii (strain Madrid E).